Reading from the N-terminus, the 526-residue chain is GMP synthase [glutamine-hydrolyzing] (526 aa).

A Glutamine amidotransferase type-1 domain is found at 13 to 204 (TVLVVDFGAQ…LYRGAGLSPD (192 aa)). Cysteine 90 (nucleophile) is an active-site residue. Active-site residues include histidine 178 and glutamate 180. Residues 205–400 (WTTGNVIEEQ…LGLPDEIVQR (196 aa)) enclose the GMPS ATP-PPase domain. Residue 232-238 (SGGVDSA) participates in ATP binding.

In terms of assembly, homodimer.

It carries out the reaction XMP + L-glutamine + ATP + H2O = GMP + L-glutamate + AMP + diphosphate + 2 H(+). Its pathway is purine metabolism; GMP biosynthesis; GMP from XMP (L-Gln route): step 1/1. Its function is as follows. Catalyzes the synthesis of GMP from XMP. This is GMP synthase [glutamine-hydrolyzing] (guaA) from Streptomyces coelicolor (strain ATCC BAA-471 / A3(2) / M145).